Consider the following 94-residue polypeptide: Small ribosomal subunit protein bS20 (94 aa).

The protein belongs to the bacterial ribosomal protein bS20 family.

Binds directly to 16S ribosomal RNA. The sequence is that of Small ribosomal subunit protein bS20 from Aquifex aeolicus (strain VF5).